Reading from the N-terminus, the 159-residue chain is Putative esterase DR_2406 (159 aa).

Belongs to the thioesterase PaaI family.

In Deinococcus radiodurans (strain ATCC 13939 / DSM 20539 / JCM 16871 / CCUG 27074 / LMG 4051 / NBRC 15346 / NCIMB 9279 / VKM B-1422 / R1), this protein is Putative esterase DR_2406.